The primary structure comprises 228 residues: Ankyrin repeat domain-containing protein 46 (228 aa).

ANK repeat units follow at residues 11–40, 44–73, 77–103, and 107–138; these read QTNVPLLQACIDGDFNYSKRLLESGFDPNI, RGRTGLHLAAARGNVDICQLLHKFGADLLA, QGNTALHLCGHVDTIQFLVSNGLKIDI, and QGATPLVLAKRRGVNKDVIRLLEFLEEQEVKG. A helical transmembrane segment spans residues 195 to 215; sequence VLLLIFVIALLSLGIAYYVSG.

It is found in the membrane. In Pongo abelii (Sumatran orangutan), this protein is Ankyrin repeat domain-containing protein 46 (ANKRD46).